The following is an 89-amino-acid chain: MARSLKKGPFVDHHLAKKVESAAGSKKPIKTWSRRSMILPEMVGITIAVHNGKNHIPVLVNENMVGHKLGEFAVTRTFKGHGGDKKSSR.

Belongs to the universal ribosomal protein uS19 family.

In terms of biological role, protein S19 forms a complex with S13 that binds strongly to the 16S ribosomal RNA. This is Small ribosomal subunit protein uS19 from Xanthomonas campestris pv. campestris (strain 8004).